We begin with the raw amino-acid sequence, 156 residues long: Endogenous retrovirus group K member 18 Pro protein (156 aa).

The Peptidase A2 domain maps to 21 to 96 (LEGLVDTGAD…IPLNLWGRDL (76 aa)). The active site involves Asp26. Residues 111–156 (YSPMSQKIMTKMGYIPGKGLGKNEDGIKVPIEAKINHGREGTGYPF) enclose the G-patch domain.

It belongs to the peptidase A2 family. HERV class-II K(HML-2) subfamily. In terms of assembly, active as a homodimer. Post-translationally, autoproteolytically processed at the N-terminus. Expected C-terminal autoprocessing not detected. The sequence shown is that of the processed Pro protein.

The catalysed reaction is Processing at the authentic HIV-1 PR recognition site and release of the mature p17 matrix and the p24 capsid protein, as a result of the cleavage of the -SQNY-|-PIVQ- cleavage site.. Its function is as follows. Retroviral proteases have roles in the processing of the primary translation products and the maturation of the viral particle. Endogenous Pro proteins may have kept, lost or modified their original function during evolution. The polypeptide is Endogenous retrovirus group K member 18 Pro protein (ERVK-18) (Homo sapiens (Human)).